We begin with the raw amino-acid sequence, 142 residues long: Baculoviral IAP repeat-containing protein 5 (142 aa).

One copy of the BIR repeat lies at 18–88; the sequence is RIYTFKNWPF…KHSPGCAFLT (71 aa). Lysine 23 is modified (N6-acetyllysine). Threonine 34 bears the Phosphothreonine; by CDK1 and CDK15 mark. Threonine 48 carries the phosphothreonine modification. Cysteine 57, cysteine 60, histidine 77, and cysteine 84 together coordinate Zn(2+). 4 positions are modified to N6-acetyllysine: lysine 90, lysine 110, lysine 112, and lysine 115. Threonine 117 is modified (phosphothreonine; by AURKB).

It belongs to the IAP family. As to quaternary structure, monomer or homodimer. Exists as a homodimer in the apo state and as a monomer in the CPC-bound state. The monomer protects cells against apoptosis more efficiently than the dimer. Only the dimeric form is capable of enhancing tubulin stability in cells. When phosphorylated, interacts with LAMTOR5/HBXIP; the resulting complex binds pro-CASP9, as well as active CASP9, but much less efficiently. Component of the chromosomal passenger complex (CPC) composed of at least BIRC5/survivin, CDCA8/borealin, INCENP, AURKB or AURKC; in the complex forms a triple-helix bundle-based subcomplex with INCENP and CDCA8. Interacts with JTB. Interacts (via BIR domain) with histone H3 phosphorylated at 'Thr-3' (H3pT3). Interacts with EVI5. Interacts with GTP-bound RAN in both the S and M phases of the cell cycle. Interacts with USP9X. Interacts with tubulin. Interacts with BIRC2/c-IAP1. The monomeric form interacts with XIAP/BIRC4. Both the dimeric and monomeric form can interact with DIABLO/SMAC. Interacts with BIRC6/bruce. Interacts with FBXL7; this interaction facilitates the polyubiquitination and subsequent proteasomal degradation of BIRC5 by the SCF(FBXL7) E3 ubiquitin-protein ligase complex. Ubiquitinated by the Cul9-RING ubiquitin-protein ligase complex, leading to its degradation. Ubiquitination is required for centrosomal targeting. Deubiquitinated by USP35 or USP38; leading to stabilization. In terms of processing, in vitro phosphorylation at Thr-117 by AURKB prevents interaction with INCENP and localization to mitotic chromosomes. Phosphorylation at Thr-48 by CK2 is critical for its mitotic and anti-apoptotic activities. Phosphorylation at Thr-34 by CDK15 is critical for its anti-apoptotic activity.

Its subcellular location is the cytoplasm. The protein localises to the nucleus. It is found in the chromosome. The protein resides in the centromere. It localises to the cytoskeleton. Its subcellular location is the spindle. The protein localises to the kinetochore. It is found in the midbody. In terms of biological role, multitasking protein that has dual roles in promoting cell proliferation and preventing apoptosis. Component of a chromosome passage protein complex (CPC) which is essential for chromosome alignment and segregation during mitosis and cytokinesis. Acts as an important regulator of the localization of this complex; directs CPC movement to different locations from the inner centromere during prometaphase to midbody during cytokinesis and participates in the organization of the center spindle by associating with polymerized microtubules. Involved in the recruitment of CPC to centromeres during early mitosis via association with histone H3 phosphorylated at 'Thr-3' (H3pT3) during mitosis. The complex with RAN plays a role in mitotic spindle formation by serving as a physical scaffold to help deliver the RAN effector molecule TPX2 to microtubules. May counteract a default induction of apoptosis in G2/M phase. The acetylated form represses STAT3 transactivation of target gene promoters. May play a role in neoplasia. Inhibitor of CASP3 and CASP7. Essential for the maintenance of mitochondrial integrity and function. This Rattus norvegicus (Rat) protein is Baculoviral IAP repeat-containing protein 5 (Birc5).